The sequence spans 375 residues: Delta(9) fatty acid conjugase-like enzyme (375 aa).

Helical transmembrane passes span 38–58 and 66–86; these read LSLS…LFYV and LPYS…GAFL. Positions 94-98 match the Histidine box-1 motif; sequence HECGH. Residues 130–134 carry the Histidine box-2 motif; that stretch reads HRNHH. Helical transmembrane passes span 168–188, 219–239, and 241–261; these read FGLV…YLIF, VFFS…IAIA, and GAML…AFIF. A Histidine box-3 motif is present at residues 307–311; sequence HVVHH.

This sequence belongs to the fatty acid desaturase type 1 family.

It localises to the membrane. Involved in the biosynthesis of dimorphecolic acid (9-OH-18:2(10E,12E)). Catalyzes the formation of the C-9 hydroxyl group and the (E)-delta(10) double bond from the trans-linoleic acid (16:2(9Z,12E)) produced by FAD2-1. Very limited activity with cis-linoleic acid (16:2(9Z,12Z)). The protein is Delta(9) fatty acid conjugase-like enzyme of Dimorphotheca sinuata (African daisy).